The sequence spans 156 residues: ATP synthase subunit b (156 aa).

Residues 3–23 (ITFTIFAQSIAFAALIWIVAT) form a helical membrane-spanning segment.

This sequence belongs to the ATPase B chain family. As to quaternary structure, F-type ATPases have 2 components, F(1) - the catalytic core - and F(0) - the membrane proton channel. F(1) has five subunits: alpha(3), beta(3), gamma(1), delta(1), epsilon(1). F(0) has three main subunits: a(1), b(2) and c(10-14). The alpha and beta chains form an alternating ring which encloses part of the gamma chain. F(1) is attached to F(0) by a central stalk formed by the gamma and epsilon chains, while a peripheral stalk is formed by the delta and b chains.

Its subcellular location is the cell inner membrane. Its function is as follows. F(1)F(0) ATP synthase produces ATP from ADP in the presence of a proton or sodium gradient. F-type ATPases consist of two structural domains, F(1) containing the extramembraneous catalytic core and F(0) containing the membrane proton channel, linked together by a central stalk and a peripheral stalk. During catalysis, ATP synthesis in the catalytic domain of F(1) is coupled via a rotary mechanism of the central stalk subunits to proton translocation. Component of the F(0) channel, it forms part of the peripheral stalk, linking F(1) to F(0). In Xylella fastidiosa (strain M12), this protein is ATP synthase subunit b.